We begin with the raw amino-acid sequence, 220 residues long: MGFSSFISQPLSSSLSVMKRNVSAKRSELCLDSSKIRLDHRWSFIGGSRISVQSNSYTVVHKKFSGVRASWLTTTQIASSVFAVGTTAVLPFYTLMVVAPKAEITKKCMESSVPYIILGVLYVYLLYISWTPETLKYMFSSKYMLPELSGIAKMFSSEMTLASAWIHLLVVDLFAARQVYNDGLENQIETRHSVSLCLLFCPVGIVSHFVTKAIINNQYK.

The transit peptide at 1 to 37 directs the protein to the chloroplast; that stretch reads MGFSSFISQPLSSSLSVMKRNVSAKRSELCLDSSKIR. 4 helical membrane passes run 77-97, 112-132, 154-174, and 195-215; these read IASSVFAVGTTAVLPFYTLMV, SVPYIILGVLYVYLLYISWTP, MFSSEMTLASAWIHLLVVDLF, and SLCLLFCPVGIVSHFVTKAII.

As to expression, expressed in root vasculature, root hairs, leaves, trichomes, sepals, stamens, stigma, pedicels, siliques and embryo.

Its subcellular location is the plastid. It is found in the chloroplast membrane. Functionally, required for neoxanthin biosynthesis, an intermediary step in abscisic acid (ABA) biosynthesis. Probably not involved directly in the enzymatic conversion of violaxanthin to neoxanthin. Cannot convert violaxanthin to neoxanthin in vitro. Required for ABA biosynthesis in response to drought stress. Required for neoxanthin biosynthesis which is involved in photoprotection of photosystem II (PSII). Neoxanthin acts as an antioxidant within the photosystem PSII supercomplex. This chain is Protein ABA DEFICIENT 4, chloroplastic, found in Arabidopsis thaliana (Mouse-ear cress).